Here is a 451-residue protein sequence, read N- to C-terminus: MSDFFHSDVLSVSELNAFAKSILENHLAGLWIAGEVSNLTRAASGHYYFSLKDSRAQVRCAMFKGAAARLAKPLKEGDHIEVAGKISIYETRGEFQITVNEVRLKGLGQLYEAYERLKAQLQAEGAFAAERKKPLPARPQCIGIVTSLAAAALRDVVTTLKRRAPEIPVIVYPTPVQGTGSELQIAQAIKTASQRAECDVLIVCRGGGSIEDLWAFNEEPVVRAIEACTVPVVSGVGHETDFTLADFVADVRAPTPTGAAELVSPNRQESLHRLAQAQGRLKTVLEQRYFDASQKLDWLARQIRHPRQKLDEQRASIGKLAQTLSYSMKQNLRAHTARFERQTQALQHYRPDVSVCKNNIVRLQTALPAAFSQLLTHRRQSLTAQAALLEAVSPQHILERGFSVVKDTRGQVIRNADVLKQGQKLHITFADGETDVRVSKEQGQQDLFDCI.

The protein belongs to the XseA family. As to quaternary structure, heterooligomer composed of large and small subunits.

It localises to the cytoplasm. It catalyses the reaction Exonucleolytic cleavage in either 5'- to 3'- or 3'- to 5'-direction to yield nucleoside 5'-phosphates.. Functionally, bidirectionally degrades single-stranded DNA into large acid-insoluble oligonucleotides, which are then degraded further into small acid-soluble oligonucleotides. The protein is Exodeoxyribonuclease 7 large subunit of Neisseria meningitidis serogroup C / serotype 2a (strain ATCC 700532 / DSM 15464 / FAM18).